The primary structure comprises 249 residues: Proteasome subunit alpha type-3 (249 aa).

Ser-2 carries the post-translational modification N-acetylserine. Ser-214 and Ser-220 each carry O-acetylserine. Residue Lys-221 forms a Glycyl lysine isopeptide (Lys-Gly) (interchain with G-Cter in ubiquitin) linkage.

It belongs to the peptidase T1A family. Component of the 20S core complex of the 26S proteasome. The 26S proteasome is composed of a core protease (CP), known as the 20S proteasome, capped at one or both ends by the 19S regulatory particle (RP/PA700). The 20S proteasome core is composed of 28 subunits that are arranged in four stacked rings, resulting in a barrel-shaped structure. The two end rings are each formed by seven alpha subunits, and the two central rings are each formed by seven beta subunits. The catalytic chamber with the active sites is on the inside of the barrel. Ubiquitous low levels.

It localises to the cytoplasm. The protein localises to the nucleus. Functionally, the proteasome is a multicatalytic proteinase complex which is characterized by its ability to cleave peptides with Arg, Phe, Tyr, Leu, and Glu adjacent to the leaving group at neutral or slightly basic pH. The proteasome has an ATP-dependent proteolytic activity. The polypeptide is Proteasome subunit alpha type-3 (PAG1) (Arabidopsis thaliana (Mouse-ear cress)).